A 299-amino-acid chain; its full sequence is Biphenyl-2,3-diol 1,2-dioxygenase (299 aa).

VOC domains follow at residues Glu6–Gly121 and Gly146–Gly267. Positions 149, 212, and 263 each coordinate Fe cation.

The protein belongs to the extradiol ring-cleavage dioxygenase family. Homooctamer. The cofactor is Fe(2+).

The catalysed reaction is biphenyl-2,3-diol + O2 = 2-hydroxy-6-oxo-6-phenylhexa-2,4-dienoate + H(+). Its pathway is xenobiotic degradation; biphenyl degradation; 2-hydroxy-2,4-pentadienoate and benzoate from biphenyl: step 3/4. The polypeptide is Biphenyl-2,3-diol 1,2-dioxygenase (bphC) (Sphingomonas paucimobilis (Pseudomonas paucimobilis)).